The primary structure comprises 428 residues: Glial fibrillary acidic protein (428 aa).

A head region spans residues 1–68; sequence MERRRVTSAT…KETRASERAE (68 aa). T7 bears the Phosphothreonine; by AURKB and ROCK1 mark. R12 is subject to Omega-N-methylarginine. Residue S13 is modified to Phosphoserine; by AURKB and ROCK1. Citrulline occurs at positions 26 and 32. Position 34 is a phosphoserine; by AURKB and ROCK1 (S34). The 309-residue stretch at 65–373 folds into the IF rod domain; sequence ERAEMMELND…KLLEGEENRI (309 aa). Positions 69–100 are coil 1A; that stretch reads MMELNDRFASYIEKVRFLEQQNKALAAELNQL. Residue S78 is modified to Phosphoserine. The segment at 101-111 is linker 1; sequence RAKEPTKLADV. Phosphothreonine occurs at positions 106 and 146. The segment at 112-210 is coil 1B; that stretch reads YQAELRELRL…EEEVRELQEQ (99 aa). Residues 211–226 form a linker 12 region; it reads LAQQQVHVEMDVAKPD. The tract at residues 227-248 is coil 2A; it reads LTAALREIRTQYEAVASSNMHE. The tract at residues 249–252 is linker 2; that stretch reads AEEW. The interval 253-373 is coil 2B; it reads YRSKFADLND…KLLEGEENRI (121 aa). Position 266 is a citrulline (R266). S319 is subject to Phosphoserine. The tail stretch occupies residues 374–428; sequence TIPVQTFSNLQIRETSLDTKSVSEGHLKRNIVVKTVEMRDGEVIKESKQEHKDVM. T379 is subject to Phosphothreonine. S381 carries the phosphoserine modification. Citrulline occurs at positions 402 and 412.

Belongs to the intermediate filament family. In terms of assembly, interacts with SYNM. In terms of processing, phosphorylated by PKN1.

It is found in the cytoplasm. Functionally, GFAP, a class-III intermediate filament, is a cell-specific marker that, during the development of the central nervous system, distinguishes astrocytes from other glial cells. In Bos taurus (Bovine), this protein is Glial fibrillary acidic protein (GFAP).